The following is a 69-amino-acid chain: Conopeptide Y-Fe1 (69 aa).

Positions 1–20 (MSKLGVVLFVFLLLLPLAAP) are cleaved as a signal peptide. The propeptide occupies 21–69 (QPVGDQPADQPADRNAEARGTYLYPFSYYRLWRYFTRFLHKQPYYYVHI).

It belongs to the conotoxin M superfamily. Conopeptide Y family. In terms of tissue distribution, expressed by the venom duct.

It is found in the secreted. In terms of biological role, tyrosine-rich conopeptide that specifically targets voltage-gated potassium channel Kv1.6/KCNA6 (IC(50) is 8.8 uM) that is expressed in Xenopus oocytes. In vivo, causes seizures (at 5 nmol) and death (20 nmol) when intracranially injected into mice, and causes paralysis (at 10 pmol) to C.elegans. The chain is Conopeptide Y-Fe1 from Conus ferrugineus (Cone snail).